Here is a 424-residue protein sequence, read N- to C-terminus: Na(+), Li(+), K(+)/H(+) antiporter (424 aa).

12 helical membrane passes run Val-15–Phe-35, Gly-42–Gly-62, Met-74–Ser-94, Val-105–Ile-125, Phe-141–Phe-161, Phe-165–Tyr-185, Leu-227–Ile-247, Thr-274–Ile-294, Trp-305–Ser-325, Phe-327–Leu-347, Ala-367–Phe-389, and Trp-393–Leu-415.

The protein belongs to the major facilitator superfamily.

It localises to the cell membrane. With respect to regulation, norfloxacin transport is inhibited by CCCP. Exhibits dual functions as a Na(+)(Li(+)/K(+))/H(+) antiporter and a multidrug efflux pump. Catalyzes the efflux of Na(+), Li(+) and K(+) in exchange for external protons. Shows a preference for Na(+), followed by K(+) and Li(+). Can also function as a multidrug efflux pump. Transports ethidium bromide and norfloxacin. The polypeptide is Na(+), Li(+), K(+)/H(+) antiporter (Planococcus maritimus).